Consider the following 153-residue polypeptide: 6,7-dimethyl-8-ribityllumazine synthase (153 aa).

5-amino-6-(D-ribitylamino)uracil is bound by residues Phe22, 56-58 (AFE), and 80-82 (TVI). 85-86 (AT) contacts (2S)-2-hydroxy-3-oxobutyl phosphate. Residue His88 is the Proton donor of the active site. Position 113 (Phe113) interacts with 5-amino-6-(D-ribitylamino)uracil. Arg127 contributes to the (2S)-2-hydroxy-3-oxobutyl phosphate binding site.

The protein belongs to the DMRL synthase family.

It carries out the reaction (2S)-2-hydroxy-3-oxobutyl phosphate + 5-amino-6-(D-ribitylamino)uracil = 6,7-dimethyl-8-(1-D-ribityl)lumazine + phosphate + 2 H2O + H(+). Its pathway is cofactor biosynthesis; riboflavin biosynthesis; riboflavin from 2-hydroxy-3-oxobutyl phosphate and 5-amino-6-(D-ribitylamino)uracil: step 1/2. Catalyzes the formation of 6,7-dimethyl-8-ribityllumazine by condensation of 5-amino-6-(D-ribitylamino)uracil with 3,4-dihydroxy-2-butanone 4-phosphate. This is the penultimate step in the biosynthesis of riboflavin. The polypeptide is 6,7-dimethyl-8-ribityllumazine synthase (Clostridium perfringens (strain 13 / Type A)).